The sequence spans 289 residues: Pre-mRNA-splicing factor cwf23 (289 aa).

In terms of domain architecture, J spans Asp9–Arg74. Basic and acidic residues predominate over residues Glu129 to Ser148. Disordered stretches follow at residues Glu129 to Ser161 and Lys269 to Ala289.

Belongs to the DnaJ family. Belongs to the 40S cdc5-associated complex (or cwf complex), a spliceosome sub-complex reminiscent of a late-stage spliceosome composed of the U2, U5 and U6 snRNAs and at least brr2, cdc5, cwf2/prp3, cwf3/syf1, cwf4/syf3, cwf5/ecm2, spp42/cwf6, cwf7/spf27, cwf8, cwf9, cwf10, cwf11, cwf12, prp45/cwf13, cwf14, cwf15, cwf16, cwf17, cwf18, cwf19, cwf20, cwf21, cwf22, cwf23, cwf24, cwf25, cwf26, cyp7/cwf27, cwf28, cwf29/ist3, lea1, msl1, prp5/cwf1, prp10, prp12/sap130, prp17, prp22, sap61, sap62, sap114, sap145, slu7, smb1, smd1, smd3, smf1, smg1 and syf2.

Its subcellular location is the cytoplasm. It localises to the nucleus. Its function is as follows. Involved in pre-mRNA splicing. May be involved in endoplasmic reticulum-associated protein degradation (ERAD) and required for growth at low and high temperatures. The sequence is that of Pre-mRNA-splicing factor cwf23 (cwf23) from Schizosaccharomyces pombe (strain 972 / ATCC 24843) (Fission yeast).